The sequence spans 361 residues: Mitogen-activated protein kinase 14 (361 aa).

The 285-residue stretch at 25–309 folds into the Protein kinase domain; that stretch reads YQNLTPVGSG…AAEALAHSYF (285 aa). Residues 31 to 39 and K54 each bind ATP; that span reads VGSGAYGSV. D151 (proton acceptor) is an active-site residue. At T181 the chain carries Phosphothreonine. A TXY motif is present at residues 181–183; the sequence is TGY. Residue Y183 is modified to Phosphotyrosine.

It belongs to the protein kinase superfamily. CMGC Ser/Thr protein kinase family. MAP kinase subfamily. It depends on Mg(2+) as a cofactor. Post-translationally, dually phosphorylated on Thr-181 and Tyr-183, which activates the enzyme.

It carries out the reaction L-seryl-[protein] + ATP = O-phospho-L-seryl-[protein] + ADP + H(+). It catalyses the reaction L-threonyl-[protein] + ATP = O-phospho-L-threonyl-[protein] + ADP + H(+). Its activity is regulated as follows. Activated by tyrosine and threonine phosphorylation. In terms of biological role, serine/threonine kinase which acts as an essential component of the MAP kinase signal transduction pathway. mapk14a is one of the four p38 MAPKs which play an important role in the cascades of cellular responses evoked by extracellular stimuli such as pro-inflammatory cytokines or physical stress leading to direct activation of transcription factors. Accordingly, p38 MAPKs phosphorylate a broad range of proteins and it has been estimated that they may have approximately 200 to 300 substrates each. Some of the targets are downstream kinases which are activated through phosphorylation and further phosphorylate additional targets. MPK2 is activated by upstream MAPKK/MAPKKK and stimulates MAPKAP kinase 2 to phosphorylate small heat shock proteins. Does not phosphorylate myelin basic protein or MAPKAP kinase 1. This is Mitogen-activated protein kinase 14 (mapk14) from Xenopus laevis (African clawed frog).